Here is a 570-residue protein sequence, read N- to C-terminus: Glycine--tRNA ligase (570 aa).

Arg-99 and Glu-165 together coordinate substrate. ATP is bound by residues 197-199 (RNE), 207-212 (IRLREF), 324-325 (EC), and 443-446 (GIDR). Position 212–216 (212–216 (FTQAE)) interacts with substrate. 439–443 (EPSFG) provides a ligand contact to substrate.

This sequence belongs to the class-II aminoacyl-tRNA synthetase family.

It localises to the cytoplasm. The enzyme catalyses tRNA(Gly) + glycine + ATP = glycyl-tRNA(Gly) + AMP + diphosphate. In terms of biological role, catalyzes the attachment of glycine to tRNA(Gly). The protein is Glycine--tRNA ligase of Pyrococcus horikoshii (strain ATCC 700860 / DSM 12428 / JCM 9974 / NBRC 100139 / OT-3).